The chain runs to 691 residues: ERI1 exoribonuclease 2 (691 aa).

The region spanning 37–226 is the Exonuclease domain; sequence LIVIDFESTC…DDSRNTALLA (190 aa). Mg(2+)-binding residues include Asp-41, Glu-43, and Asp-156. Glu-43 functions as the Proton acceptor in the catalytic mechanism. Glu-43 contacts AMP. The active-site Proton acceptor is His-213. Residue His-213 coordinates AMP. Mg(2+) is bound at residue Asp-218. Cys-597, Cys-599, Cys-622, and Cys-634 together coordinate Zn(2+). Residues 597–643 form a GRF-type zinc finger; the sequence is CKCGRRSKRLVVSNNGPNHGKVFYCCPIGKYQENRKCCGYFKWEQTL.

The protein belongs to the ERI2 family. Mg(2+) serves as cofactor.

In Homo sapiens (Human), this protein is ERI1 exoribonuclease 2 (ERI2).